The sequence spans 291 residues: Small ribosomal subunit biogenesis GTPase RsgA 2 (291 aa).

The region spanning 63-221 (ENALVRPPVA…VADTPGFSSI (159 aa)) is the CP-type G domain. GTP is bound by residues 112-115 (SKMD) and 164-172 (GQSGVGKST). Zn(2+)-binding residues include Cys-245, Cys-250, His-252, and Cys-258.

It belongs to the TRAFAC class YlqF/YawG GTPase family. RsgA subfamily. As to quaternary structure, monomer. Associates with 30S ribosomal subunit, binds 16S rRNA. Zn(2+) serves as cofactor.

Its subcellular location is the cytoplasm. Its function is as follows. One of several proteins that assist in the late maturation steps of the functional core of the 30S ribosomal subunit. Helps release RbfA from mature subunits. May play a role in the assembly of ribosomal proteins into the subunit. Circularly permuted GTPase that catalyzes slow GTP hydrolysis, GTPase activity is stimulated by the 30S ribosomal subunit. The chain is Small ribosomal subunit biogenesis GTPase RsgA 2 from Listeria monocytogenes serovar 1/2a (strain ATCC BAA-679 / EGD-e).